The sequence spans 181 residues: Inner membrane-spanning protein YciB (181 aa).

The next 5 helical transmembrane spans lie at 10 to 30 (LIIF…GALI), 50 to 70 (MHLI…ILHD), 72 to 92 (SFIK…LGVS), 118 to 138 (VTWY…YVAF), and 148 to 168 (FKVF…VLYL).

The protein belongs to the YciB family.

The protein resides in the cell inner membrane. Its function is as follows. Plays a role in cell envelope biogenesis, maintenance of cell envelope integrity and membrane homeostasis. This Shewanella halifaxensis (strain HAW-EB4) protein is Inner membrane-spanning protein YciB.